The chain runs to 595 residues: Miltiradiene synthase KSL1, chloroplastic (595 aa).

The N-terminal 47 residues, 1–47 (MSLAFNPAATAFSGNGARSRRENFPVKHVTVRGFPMITNKSSFAVKC), are a transit peptide targeting the chloroplast. The Mg(2+) site is built by Asp-334, Asp-338, Asn-478, and Glu-486. Positions 334 to 338 (DDFFD) match the DDXXD motif motif.

Belongs to the terpene synthase family. The cofactor is Mg(2+).

Its subcellular location is the plastid. The protein localises to the chloroplast. The enzyme catalyses (+)-copalyl diphosphate = miltiradiene + diphosphate. It participates in secondary metabolite biosynthesis; terpenoid biosynthesis. Its function is as follows. Involved in tanshinone biosynthesis in hairy roots. Catalyzes the conversion of copalyl diphosphate (CPP) to miltiradiene. The sequence is that of Miltiradiene synthase KSL1, chloroplastic from Salvia miltiorrhiza (Chinese sage).